We begin with the raw amino-acid sequence, 341 residues long: Methionine import ATP-binding protein MetN 1 (341 aa).

The ABC transporter domain occupies Ile-2–Val-241. An ATP-binding site is contributed by Gly-38 to Ser-45.

This sequence belongs to the ABC transporter superfamily. Methionine importer (TC 3.A.1.24) family. The complex is composed of two ATP-binding proteins (MetN), two transmembrane proteins (MetI) and a solute-binding protein (MetQ).

The protein resides in the cell membrane. It catalyses the reaction L-methionine(out) + ATP + H2O = L-methionine(in) + ADP + phosphate + H(+). The enzyme catalyses D-methionine(out) + ATP + H2O = D-methionine(in) + ADP + phosphate + H(+). Functionally, part of the ABC transporter complex MetNIQ involved in methionine import. Responsible for energy coupling to the transport system. This Staphylococcus epidermidis (strain ATCC 35984 / DSM 28319 / BCRC 17069 / CCUG 31568 / BM 3577 / RP62A) protein is Methionine import ATP-binding protein MetN 1.